The primary structure comprises 339 residues: Ketol-acid reductoisomerase (NADP(+)) (339 aa).

The 182-residue stretch at 1-182 folds into the KARI N-terminal Rossmann domain; it reads MRVYYDRDAD…GGGRAGIIET (182 aa). NADP(+)-binding positions include 24–27, Arg-48, Ser-51, Ser-53, and 83–86; these read YGSQ and DELQ. His-108 is a catalytic residue. Residue Gly-134 coordinates NADP(+). The KARI C-terminal knotted domain maps to 183-328; the sequence is TFKEECETDL…AKLRDMMPWI (146 aa). Asp-191, Glu-195, Glu-227, and Glu-231 together coordinate Mg(2+). Ser-252 is a substrate binding site.

It belongs to the ketol-acid reductoisomerase family. Requires Mg(2+) as cofactor.

The catalysed reaction is (2R)-2,3-dihydroxy-3-methylbutanoate + NADP(+) = (2S)-2-acetolactate + NADPH + H(+). It carries out the reaction (2R,3R)-2,3-dihydroxy-3-methylpentanoate + NADP(+) = (S)-2-ethyl-2-hydroxy-3-oxobutanoate + NADPH + H(+). It functions in the pathway amino-acid biosynthesis; L-isoleucine biosynthesis; L-isoleucine from 2-oxobutanoate: step 2/4. Its pathway is amino-acid biosynthesis; L-valine biosynthesis; L-valine from pyruvate: step 2/4. Its function is as follows. Involved in the biosynthesis of branched-chain amino acids (BCAA). Catalyzes an alkyl-migration followed by a ketol-acid reduction of (S)-2-acetolactate (S2AL) to yield (R)-2,3-dihydroxy-isovalerate. In the isomerase reaction, S2AL is rearranged via a Mg-dependent methyl migration to produce 3-hydroxy-3-methyl-2-ketobutyrate (HMKB). In the reductase reaction, this 2-ketoacid undergoes a metal-dependent reduction by NADPH to yield (R)-2,3-dihydroxy-isovalerate. In Bradyrhizobium diazoefficiens (strain JCM 10833 / BCRC 13528 / IAM 13628 / NBRC 14792 / USDA 110), this protein is Ketol-acid reductoisomerase (NADP(+)).